The primary structure comprises 171 residues: Endoribonuclease YbeY (171 aa).

Zn(2+) is bound by residues His126, His130, and His136.

Belongs to the endoribonuclease YbeY family. The cofactor is Zn(2+).

It localises to the cytoplasm. Single strand-specific metallo-endoribonuclease involved in late-stage 70S ribosome quality control and in maturation of the 3' terminus of the 16S rRNA. This chain is Endoribonuclease YbeY, found in Rhizobium etli (strain CIAT 652).